A 148-amino-acid polypeptide reads, in one-letter code: Large ribosomal subunit protein uL15 (148 aa).

Residues 1–51 are disordered; the sequence is MNLSSLKPAEGAVKSRKRIGRGPGSGLGGTSTRGHKGAKSRSGYSKKIGFE. Over residues 21–31 the composition is skewed to gly residues; the sequence is RGPGSGLGGTS.

Belongs to the universal ribosomal protein uL15 family. As to quaternary structure, part of the 50S ribosomal subunit.

In terms of biological role, binds to the 23S rRNA. This is Large ribosomal subunit protein uL15 from Porphyromonas gingivalis (strain ATCC 33277 / DSM 20709 / CIP 103683 / JCM 12257 / NCTC 11834 / 2561).